Reading from the N-terminus, the 786-residue chain is Wall-associated receptor kinase-like 17 (786 aa).

The signal sequence occupies residues 1–30 (MSYKNTNNSHLILFKLLLLLILYSADLTAS). Residues 31–369 (SSCRSECGGC…YRCVGDKTKA (339 aa)) lie on the Extracellular side of the membrane. Residues N69, N122, N160, N165, and N274 are each glycosylated (N-linked (GlcNAc...) asparagine). Residues 301–362 (CICDYTMSII…CVNFEGGYRC (62 aa)) form an atypical EGF-like region. 3 cysteine pairs are disulfide-bonded: C303-C318, C340-C353, and C347-C362. A helical membrane pass occupies residues 370-390 (IMIGAGTGFGVLVLVGGVWWL). Topologically, residues 391–786 (RKFLVKRRMA…VEPLNPLLTW (396 aa)) are cytoplasmic. At T433 the chain carries Phosphothreonine. The Protein kinase domain maps to 444–719 (FSENRVLGHG…REVFTELERI (276 aa)). ATP is bound by residues 450-458 (LGHGGQGTV) and K472. A Phosphotyrosine modification is found at Y517. The Proton acceptor role is filled by D570. A phosphothreonine mark is found at T604 and T609. A Phosphotyrosine modification is found at Y617. Low complexity predominate over residues 766–775 (SSIVASPPSS). Residues 766-786 (SSIVASPPSSDVEPLNPLLTW) form a disordered region.

The protein belongs to the protein kinase superfamily. Ser/Thr protein kinase family.

The protein resides in the membrane. It catalyses the reaction L-seryl-[protein] + ATP = O-phospho-L-seryl-[protein] + ADP + H(+). The catalysed reaction is L-threonyl-[protein] + ATP = O-phospho-L-threonyl-[protein] + ADP + H(+). In terms of biological role, serine/threonine-protein kinase that may function as a signaling receptor of extracellular matrix component. The chain is Wall-associated receptor kinase-like 17 (WAKL17) from Arabidopsis thaliana (Mouse-ear cress).